The chain runs to 278 residues: 3-methyl-2-oxobutanoate hydroxymethyltransferase 1 (278 aa).

Positions 49 and 88 each coordinate Mg(2+). Residues 49-50 (DS), D88, and K118 each bind 3-methyl-2-oxobutanoate. Mg(2+) is bound at residue E120. The active-site Proton acceptor is the E187.

This sequence belongs to the PanB family. As to quaternary structure, homodecamer; pentamer of dimers. Mg(2+) is required as a cofactor.

It is found in the cytoplasm. It carries out the reaction 3-methyl-2-oxobutanoate + (6R)-5,10-methylene-5,6,7,8-tetrahydrofolate + H2O = 2-dehydropantoate + (6S)-5,6,7,8-tetrahydrofolate. It functions in the pathway cofactor biosynthesis; (R)-pantothenate biosynthesis; (R)-pantoate from 3-methyl-2-oxobutanoate: step 1/2. Catalyzes the reversible reaction in which hydroxymethyl group from 5,10-methylenetetrahydrofolate is transferred onto alpha-ketoisovalerate to form ketopantoate. The polypeptide is 3-methyl-2-oxobutanoate hydroxymethyltransferase 1 (Hahella chejuensis (strain KCTC 2396)).